The sequence spans 232 residues: E3 ubiquitin-protein ligase RNF125 (232 aa).

Polar residues predominate over residues 1 to 10 (MGSVLSTDSG). The disordered stretch occupies residues 1 to 23 (MGSVLSTDSGKSAPASATARALE). A lipid anchor (N-myristoyl glycine) is attached at Gly-2. The Zn(2+) site is built by Cys-37 and Cys-40. An RING-type zinc finger spans residues 37 to 76 (CAVCLEVLHQPVRTRCGHVFCRSCIATSLKNNKWTCPYCR). Positions 43 to 45 (VLH) are interaction with the C2HC RNF-type zinc finger. 8 residues coordinate Zn(2+): Cys-52, His-54, Cys-57, Cys-60, Cys-72, Cys-75, Cys-100, and Cys-103. A C2HC RNF-type zinc finger spans residues 100–119 (CAECDTLVCLSEMRAHIRTC). Residues 109–113 (LSEMR) form an interaction with the RING-type zinc finger region. 2 residues coordinate Zn(2+): His-115 and Cys-119. The tract at residues 120-128 (QKYIDKYGP) is linker region. Residues 210 to 224 (EEALIRRVLDRSLLE) form a required for interaction with ubiquitin and for autoubiquitination region.

As to quaternary structure, interacts with UBE2D1. Interacts with VCP/p97; leading to recruit RNF125 to RIGI and promote ubiquitination of RIGI. Post-translationally, autoubiquitinated, leading to its subsequent proteasomal degradation. Predominantly expressed in lymphoid tissues, including bone marrow, spleen and thymus. Also weakly expressed in other tissues. Predominant in the CD4(+) and CD8(+) T-cells, suggesting that it is preferentially confined to T-cells.

The protein localises to the golgi apparatus membrane. The catalysed reaction is S-ubiquitinyl-[E2 ubiquitin-conjugating enzyme]-L-cysteine + [acceptor protein]-L-lysine = [E2 ubiquitin-conjugating enzyme]-L-cysteine + N(6)-ubiquitinyl-[acceptor protein]-L-lysine.. Its pathway is protein modification; protein ubiquitination. E3 ubiquitin-protein ligase that mediates ubiquitination and subsequent proteasomal degradation of target proteins, such as RIGI, MAVS/IPS1, IFIH1/MDA5, JAK1 and p53/TP53. Acts as a negative regulator of type I interferon production by mediating ubiquitination of RIGI at 'Lys-181', leading to RIGI degradation. Mediates ubiquitination and subsequent degradation of p53/TP53. Mediates ubiquitination and subsequent degradation of JAK1. Acts as a positive regulator of T-cell activation. The polypeptide is E3 ubiquitin-protein ligase RNF125 (Homo sapiens (Human)).